Reading from the N-terminus, the 298-residue chain is Protease HtpX homolog (298 aa).

The next 2 membrane-spanning stretches (helical) occupy residues 5 to 25 (IFLFILTNILVLTTIGIVLSV) and 45 to 65 (MALLVFSLVVGFVGSFTSLAI). H155 contacts Zn(2+). The active site involves E156. Zn(2+) is bound at residue H159. 2 helical membrane passes run 170–190 (LLQGIVNTFVVFLSRIAAWIA) and 204–224 (FIAMIIFQIVFSILGSLVVFA). E230 is a Zn(2+) binding site.

This sequence belongs to the peptidase M48B family. Zn(2+) is required as a cofactor.

It is found in the cell membrane. This is Protease HtpX homolog from Bacillus subtilis (strain 168).